The following is a 769-amino-acid chain: Sensor protein DivL (769 aa).

Residues Leu6–His26 traverse the membrane as a helical segment. Residues Asn547 to Gln758 form the Histidine kinase domain. Tyr550 is subject to Phosphotyrosine; by autocatalysis.

Post-translationally, autophosphorylated.

It localises to the cell membrane. The enzyme catalyses ATP + protein L-histidine = ADP + protein N-phospho-L-histidine.. In terms of biological role, required for cell division and growth. It catalyzes the phosphorylation of CtrA and activates transcription in vitro of the cell cycle-regulated fliF promoter. The protein is Sensor protein DivL (divL) of Caulobacter vibrioides (strain ATCC 19089 / CIP 103742 / CB 15) (Caulobacter crescentus).